The chain runs to 56 residues: Ovomucoid (56 aa).

One can recognise a Kazal-like domain in the interval 6 to 56 (VDCSEYPKPDCTLEYRPLCGSDNKTYANKCNFCNAVVESNGTLTLSHFGKC). Intrachain disulfides connect Cys-8/Cys-38, Cys-16/Cys-35, and Cys-24/Cys-56. An N-linked (GlcNAc...) asparagine glycan is attached at Asn-45.

It localises to the secreted. The sequence is that of Ovomucoid from Callipepla squamata castanogastris (Chestnut bellied scaled quail).